The following is a 469-amino-acid chain: Glutamate--tRNA ligase (469 aa).

A 'HIGH' region motif is present at residues 11-21; it reads PSPTGFIHLGN. Over residues 114–131 the composition is skewed to basic and acidic residues; the sequence is QREAGEKPRYDGTWRPEP. Positions 114–139 are disordered; the sequence is QREAGEKPRYDGTWRPEPGKVLPEPP. The 'KMSKS' region motif lies at 243–247; the sequence is KMSKR. Lys-246 is an ATP binding site.

Belongs to the class-I aminoacyl-tRNA synthetase family. Glutamate--tRNA ligase type 1 subfamily. In terms of assembly, monomer.

It localises to the cytoplasm. The catalysed reaction is tRNA(Glu) + L-glutamate + ATP = L-glutamyl-tRNA(Glu) + AMP + diphosphate. In terms of biological role, catalyzes the attachment of glutamate to tRNA(Glu) in a two-step reaction: glutamate is first activated by ATP to form Glu-AMP and then transferred to the acceptor end of tRNA(Glu). The protein is Glutamate--tRNA ligase of Paraburkholderia xenovorans (strain LB400).